A 449-amino-acid chain; its full sequence is Adenylyltransferase and sulfurtransferase MOCS3 (449 aa).

Residues glycine 96, aspartate 117, 124-128 (SNLHR), lysine 141, and 185-186 (DN) each bind ATP. 2 residues coordinate Zn(2+): cysteine 227 and cysteine 230. Cysteine 244 serves as the catalytic Glycyl thioester intermediate; for adenylyltransferase activity. 2 residues coordinate Zn(2+): cysteine 302 and cysteine 305. The 97-residue stretch at 351–447 (QDKPHLLLDV…WTNQIDENFP (97 aa)) folds into the Rhodanese domain. Catalysis depends on cysteine 406, which acts as the Cysteine persulfide intermediate; for sulfurtransferase activity.

In the N-terminal section; belongs to the HesA/MoeB/ThiF family. UBA4 subfamily. Zn(2+) is required as a cofactor.

It is found in the cytoplasm. The protein localises to the cytosol. It catalyses the reaction [molybdopterin-synthase sulfur-carrier protein]-C-terminal Gly-Gly + ATP + H(+) = [molybdopterin-synthase sulfur-carrier protein]-C-terminal Gly-Gly-AMP + diphosphate. The enzyme catalyses [molybdopterin-synthase sulfur-carrier protein]-C-terminal Gly-Gly-AMP + S-sulfanyl-L-cysteinyl-[cysteine desulfurase] + AH2 = [molybdopterin-synthase sulfur-carrier protein]-C-terminal-Gly-aminoethanethioate + L-cysteinyl-[cysteine desulfurase] + A + AMP + 2 H(+). It functions in the pathway tRNA modification; 5-methoxycarbonylmethyl-2-thiouridine-tRNA biosynthesis. It participates in cofactor biosynthesis; molybdopterin biosynthesis. In terms of biological role, plays a central role in 2-thiolation of mcm(5)S(2)U at tRNA wobble positions of cytosolic tRNA(Lys), tRNA(Glu) and tRNA(Gln). Also essential during biosynthesis of the molybdenum cofactor. Acts by mediating the C-terminal thiocarboxylation of sulfur carriers URM1 and MOCS2A. Its N-terminus first activates URM1 and MOCS2A as acyl-adenylates (-COAMP), then the persulfide sulfur on the catalytic cysteine is transferred to URM1 and MOCS2A to form thiocarboxylation (-COSH) of their C-terminus. The reaction probably involves hydrogen sulfide that is generated from the persulfide intermediate and that acts as a nucleophile towards URM1 and MOCS2A. Subsequently, a transient disulfide bond is formed. Does not use thiosulfate as sulfur donor; NFS1 probably acting as a sulfur donor for thiocarboxylation reactions. The sequence is that of Adenylyltransferase and sulfurtransferase MOCS3 from Drosophila grimshawi (Hawaiian fruit fly).